The sequence spans 225 residues: Cytidylate kinase (225 aa).

11–19 (GPAAAGKST) provides a ligand contact to ATP.

It belongs to the cytidylate kinase family. Type 1 subfamily.

It localises to the cytoplasm. The catalysed reaction is CMP + ATP = CDP + ADP. The enzyme catalyses dCMP + ATP = dCDP + ADP. The protein is Cytidylate kinase of Bacillus cereus (strain ATCC 10987 / NRS 248).